Here is a 63-residue protein sequence, read N- to C-terminus: Small ribosomal subunit protein eS31 (63 aa).

Zn(2+) is bound by residues C34, C37, C53, and C56. A C4-type zinc finger spans residues 34-56 (CPKCGSVMAFHREPVPRWHCGKC).

Belongs to the eukaryotic ribosomal protein eS31 family. As to quaternary structure, part of the 30S ribosomal subunit. Zn(2+) serves as cofactor.

The polypeptide is Small ribosomal subunit protein eS31 (Pyrobaculum neutrophilum (strain DSM 2338 / JCM 9278 / NBRC 100436 / V24Sta) (Thermoproteus neutrophilus)).